The chain runs to 129 residues: NADPH-dependent 7-cyano-7-deazaguanine reductase (129 aa).

Cys-42 (thioimide intermediate) is an active-site residue. The active-site Proton donor is the Asp-49. Substrate is bound by residues 64-66 (VEL) and 83-84 (HE).

It belongs to the GTP cyclohydrolase I family. QueF type 1 subfamily.

Its subcellular location is the cytoplasm. It catalyses the reaction 7-aminomethyl-7-carbaguanine + 2 NADP(+) = 7-cyano-7-deazaguanine + 2 NADPH + 3 H(+). It participates in tRNA modification; tRNA-queuosine biosynthesis. In terms of biological role, catalyzes the NADPH-dependent reduction of 7-cyano-7-deazaguanine (preQ0) to 7-aminomethyl-7-deazaguanine (preQ1). The protein is NADPH-dependent 7-cyano-7-deazaguanine reductase of Synechococcus sp. (strain CC9605).